An 82-amino-acid chain; its full sequence is Cytochrome b559 subunit alpha (82 aa).

Residues 22–36 (VIHFVTLPSIFLAGF) form a helical membrane-spanning segment. His24 is a heme binding site.

This sequence belongs to the PsbE/PsbF family. In terms of assembly, heterodimer of an alpha subunit and a beta subunit. PSII is composed of 1 copy each of membrane proteins PsbA, PsbB, PsbC, PsbD, PsbE, PsbF, PsbH, PsbI, PsbJ, PsbK, PsbL, PsbM, PsbT, PsbX, PsbY, PsbZ, Psb30/Ycf12, peripheral proteins PsbO, CyanoQ (PsbQ), PsbU, PsbV and a large number of cofactors. It forms dimeric complexes. Heme b is required as a cofactor.

It is found in the cellular thylakoid membrane. This b-type cytochrome is tightly associated with the reaction center of photosystem II (PSII). PSII is a light-driven water:plastoquinone oxidoreductase that uses light energy to abstract electrons from H(2)O, generating O(2) and a proton gradient subsequently used for ATP formation. It consists of a core antenna complex that captures photons, and an electron transfer chain that converts photonic excitation into a charge separation. In Parasynechococcus marenigrum (strain WH8102), this protein is Cytochrome b559 subunit alpha.